The following is a 333-amino-acid chain: Quinolinate synthase (333 aa).

Iminosuccinate contacts are provided by histidine 41 and serine 58. Cysteine 103 serves as a coordination point for [4Fe-4S] cluster. Iminosuccinate contacts are provided by residues 129 to 131 (YIN) and serine 146. [4Fe-4S] cluster is bound at residue cysteine 189. Iminosuccinate is bound by residues 215 to 217 (HPE) and threonine 232. Cysteine 282 serves as a coordination point for [4Fe-4S] cluster.

This sequence belongs to the quinolinate synthase family. Type 2 subfamily. The cofactor is [4Fe-4S] cluster.

The protein localises to the cytoplasm. The enzyme catalyses iminosuccinate + dihydroxyacetone phosphate = quinolinate + phosphate + 2 H2O + H(+). It functions in the pathway cofactor biosynthesis; NAD(+) biosynthesis; quinolinate from iminoaspartate: step 1/1. Functionally, catalyzes the condensation of iminoaspartate with dihydroxyacetone phosphate to form quinolinate. This chain is Quinolinate synthase, found in Prochlorococcus marinus (strain MIT 9303).